The chain runs to 92 residues: Probable Fe(2+)-trafficking protein (92 aa).

Belongs to the Fe(2+)-trafficking protein family.

Its function is as follows. Could be a mediator in iron transactions between iron acquisition and iron-requiring processes, such as synthesis and/or repair of Fe-S clusters in biosynthetic enzymes. This Shewanella baltica (strain OS223) protein is Probable Fe(2+)-trafficking protein.